A 226-amino-acid polypeptide reads, in one-letter code: NADH-ubiquinone oxidoreductase chain 6 (226 aa).

Helical transmembrane passes span 2–22, 28–48, 56–76, 90–110, and 169–189; these read STLGLLIMLLGIIIMCTLVIL, IYSILNLIVIYGCYASILLTV, IYILVNVGAIAVLFLFIVMMI, YNIYMIVGIIGVVGLLGILIT, and IWFIMACIILLIGMVGVIYIT.

Belongs to the complex I subunit 6 family.

The protein localises to the mitochondrion membrane. It carries out the reaction a ubiquinone + NADH + 5 H(+)(in) = a ubiquinol + NAD(+) + 4 H(+)(out). Core subunit of the mitochondrial membrane respiratory chain NADH dehydrogenase (Complex I) that is believed to belong to the minimal assembly required for catalysis. Complex I functions in the transfer of electrons from NADH to the respiratory chain. The immediate electron acceptor for the enzyme is believed to be ubiquinone. In Dictyostelium discoideum (Social amoeba), this protein is NADH-ubiquinone oxidoreductase chain 6 (nad6).